A 150-amino-acid chain; its full sequence is Ribonuclease H (150 aa).

The RNase H type-1 domain maps to 1-141 (MKSIEVHTDG…VDVLARNQAI (141 aa)). Mg(2+) is bound by residues Asp-9, Glu-47, Asp-69, and Asp-133.

This sequence belongs to the RNase H family. In terms of assembly, monomer. It depends on Mg(2+) as a cofactor.

The protein resides in the cytoplasm. The catalysed reaction is Endonucleolytic cleavage to 5'-phosphomonoester.. In terms of biological role, endonuclease that specifically degrades the RNA of RNA-DNA hybrids. The polypeptide is Ribonuclease H (Xanthomonas campestris pv. campestris (strain 8004)).